The chain runs to 462 residues: tRNA wybutosine-synthesizing protein 2 (462 aa).

S-adenosyl-L-methionine is bound by residues S257, K264, and 305 to 306; that span reads EL.

The protein belongs to the class I-like SAM-binding methyltransferase superfamily. TRM5/TYW2 family.

It is found in the cytoplasm. The catalysed reaction is 4-demethylwyosine(37) in tRNA(Phe) + S-adenosyl-L-methionine = 4-demethyl-7-[(3S)-3-amino-3-carboxypropyl]wyosine(37) in tRNA(Phe) + S-methyl-5'-thioadenosine + H(+). Its pathway is tRNA modification; wybutosine-tRNA(Phe) biosynthesis. Functionally, S-adenosyl-L-methionine-dependent transferase that acts as a component of the wybutosine biosynthesis pathway. Wybutosine is a hyper modified guanosine with a tricyclic base found at the 3'-position adjacent to the anticodon of eukaryotic phenylalanine tRNA. Catalyzes the transfer of the alpha-amino-alpha-carboxypropyl (acp) group from S-adenosyl-L-methionine to the C-7 position of 4-demethylwyosine (imG-14) to produce wybutosine-86. The polypeptide is tRNA wybutosine-synthesizing protein 2 (TRM12) (Saccharomyces cerevisiae (strain ATCC 204508 / S288c) (Baker's yeast)).